The chain runs to 421 residues: Gamma-glutamyl phosphate reductase (421 aa).

Belongs to the gamma-glutamyl phosphate reductase family.

It localises to the cytoplasm. The catalysed reaction is L-glutamate 5-semialdehyde + phosphate + NADP(+) = L-glutamyl 5-phosphate + NADPH + H(+). It participates in amino-acid biosynthesis; L-proline biosynthesis; L-glutamate 5-semialdehyde from L-glutamate: step 2/2. In terms of biological role, catalyzes the NADPH-dependent reduction of L-glutamate 5-phosphate into L-glutamate 5-semialdehyde and phosphate. The product spontaneously undergoes cyclization to form 1-pyrroline-5-carboxylate. The protein is Gamma-glutamyl phosphate reductase of Bordetella petrii (strain ATCC BAA-461 / DSM 12804 / CCUG 43448).